A 605-amino-acid chain; its full sequence is MFRSFGRLFRGSEESPTINDLTSITIYPQCFISTGKEYGSEPKHISVHVRGWVYENPDLNNLGRKDRLMLNLLRRYVGLPPKSKETGTYPEKDDENTNLQVVVDTKAQLNVNVNDGKPNDIELSSTSKTENDPPLSLHTTPDDLQGNGVNVPNPSLSASRSWYQSGYGISGFFNRIMTPSVNSQYISTIGLAKCEEYFEERSLASLQRGLKDEFVLVKIYATDKNFEQKVVAEFNVATNVEGYFIIDEVIPFYTTKNNKFSVEAVLLQSTSEDKVIKAYMSEVPVLDRNGISIISDIDDTVKNTRVIEGPRKVGETTLLAPLNTQTIEGVSDWFRVMTNLNATVHFVSNSPWQLWPTLSKFFTNDNMPYISSIYLRHFNGVLQNIIEPAAARKRSSLLTAIRSLGDRKIVLIGDNGEQDLQIYAEMAACFPERILGIFIRDVMSDFCGVLKKQTTKSNSLPEVVQTKPFATSTPDTPLKEFTTTLKDVDNEQASEFYQLEKEPDTVPSTFILHRYYTYRIFVEDRANKTRKPVVQVEHAASKLENVHILCDYCKHKCSNIMEQDWFVQLARARGVIPLHIPIVIWFNGEEPISFTEDLLKSAFAS.

The segment at 111-151 (VNVNDGKPNDIELSSTSKTENDPPLSLHTTPDDLQGNGVNV) is disordered.

It localises to the golgi apparatus. This is an uncharacterized protein from Schizosaccharomyces pombe (strain 972 / ATCC 24843) (Fission yeast).